We begin with the raw amino-acid sequence, 194 residues long: Ribosome maturation factor RimM (194 aa).

One can recognise a PRC barrel domain in the interval 92 to 190 (DDGYYDHELI…ALVVTPPEGL (99 aa)).

It belongs to the RimM family. As to quaternary structure, binds ribosomal protein uS19.

The protein resides in the cytoplasm. In terms of biological role, an accessory protein needed during the final step in the assembly of 30S ribosomal subunit, possibly for assembly of the head region. Essential for efficient processing of 16S rRNA. May be needed both before and after RbfA during the maturation of 16S rRNA. It has affinity for free ribosomal 30S subunits but not for 70S ribosomes. This Corynebacterium urealyticum (strain ATCC 43042 / DSM 7109) protein is Ribosome maturation factor RimM.